The following is a 356-amino-acid chain: Heme A synthase (356 aa).

5 helical membrane-spanning segments follow: residues 23–43 (IAIWLFVCCALVFAMVVVGGV), 105–125 (FHRLLGRVIGLAFFIPFLYFL), 141–161 (IFLLGALQGGMGWYMVKSGLV), 173–193 (AHLGLAFAIYAAMFWVALDLL), and 212–232 (STMLSALVFIMVLSGGFVAGI). His-274 provides a ligand contact to heme. Transmembrane regions (helical) follow at residues 276–296 (LIAWTLAILVPIFWLKSRAVP), 307–327 (LLLIMLAVQITLGISTLLLVV), and 329–349 (LTLAAAHQAGALLLFTAALWV). Residue His-335 participates in heme binding.

It belongs to the COX15/CtaA family. Type 2 subfamily. Interacts with CtaB. The cofactor is heme b.

Its subcellular location is the cell membrane. The catalysed reaction is Fe(II)-heme o + 2 A + H2O = Fe(II)-heme a + 2 AH2. It participates in porphyrin-containing compound metabolism; heme A biosynthesis; heme A from heme O: step 1/1. Functionally, catalyzes the conversion of heme O to heme A by two successive hydroxylations of the methyl group at C8. The first hydroxylation forms heme I, the second hydroxylation results in an unstable dihydroxymethyl group, which spontaneously dehydrates, resulting in the formyl group of heme A. This is Heme A synthase from Nitrosospira multiformis (strain ATCC 25196 / NCIMB 11849 / C 71).